The primary structure comprises 522 residues: 2-isopropylmalate synthase (522 aa).

In terms of domain architecture, Pyruvate carboxyltransferase spans 5-267; the sequence is VIIFDTTLRD…HTRINHQEIY (263 aa). Residues D14, H202, H204, and N238 each coordinate Mn(2+). Positions 392–522 are regulatory domain; it reads RLDTFNVQSG…SQVKDQKETV (131 aa).

The protein belongs to the alpha-IPM synthase/homocitrate synthase family. LeuA type 1 subfamily. Homodimer. Requires Mn(2+) as cofactor.

It is found in the cytoplasm. It catalyses the reaction 3-methyl-2-oxobutanoate + acetyl-CoA + H2O = (2S)-2-isopropylmalate + CoA + H(+). The protein operates within amino-acid biosynthesis; L-leucine biosynthesis; L-leucine from 3-methyl-2-oxobutanoate: step 1/4. Functionally, catalyzes the condensation of the acetyl group of acetyl-CoA with 3-methyl-2-oxobutanoate (2-ketoisovalerate) to form 3-carboxy-3-hydroxy-4-methylpentanoate (2-isopropylmalate). The chain is 2-isopropylmalate synthase from Erwinia tasmaniensis (strain DSM 17950 / CFBP 7177 / CIP 109463 / NCPPB 4357 / Et1/99).